The sequence spans 125 residues: Large ribosomal subunit protein eL31 (125 aa).

The protein belongs to the eukaryotic ribosomal protein eL31 family. In terms of assembly, component of the large ribosomal subunit.

The protein resides in the cytoplasm. Its function is as follows. Component of the large ribosomal subunit. The ribosome is a large ribonucleoprotein complex responsible for the synthesis of proteins in the cell. The protein is Large ribosomal subunit protein eL31 (rpl31) of Ictalurus punctatus (Channel catfish).